The primary structure comprises 274 residues: Large ribosomal subunit protein uL2cz/uL2cy (274 aa).

Disordered regions lie at residues 1–25 (MAIH…VKSN) and 224–274 (NPVD…RRSK).

It belongs to the universal ribosomal protein uL2 family. As to quaternary structure, part of the 50S ribosomal subunit.

It localises to the plastid. The protein localises to the chloroplast. This Aethionema cordifolium (Lebanon stonecress) protein is Large ribosomal subunit protein uL2cz/uL2cy (rpl2-A).